The primary structure comprises 259 residues: Dihydroorotate dehydrogenase B (NAD(+)), electron transfer subunit (259 aa).

One can recognise an FAD-binding FR-type domain in the interval 1–101 (MKIEDCTVEE…MGPLGRGYDV (101 aa)). Residues 52–55 (RPIS), 69–71 (IYR), and 76–77 (GT) contribute to the FAD site. The [2Fe-2S] cluster site is built by Cys-223, Cys-228, Cys-231, and Cys-245.

This sequence belongs to the PyrK family. Heterotetramer of 2 PyrK and 2 PyrD type B subunits. [2Fe-2S] cluster is required as a cofactor. The cofactor is FAD.

The protein operates within pyrimidine metabolism; UMP biosynthesis via de novo pathway; orotate from (S)-dihydroorotate (NAD(+) route): step 1/1. Functionally, responsible for channeling the electrons from the oxidation of dihydroorotate from the FMN redox center in the PyrD type B subunit to the ultimate electron acceptor NAD(+). This chain is Dihydroorotate dehydrogenase B (NAD(+)), electron transfer subunit, found in Fusobacterium nucleatum subsp. nucleatum (strain ATCC 25586 / DSM 15643 / BCRC 10681 / CIP 101130 / JCM 8532 / KCTC 2640 / LMG 13131 / VPI 4355).